We begin with the raw amino-acid sequence, 128 residues long: Large ribosomal subunit protein uL22 (128 aa).

The protein belongs to the universal ribosomal protein uL22 family. Part of the 50S ribosomal subunit.

This protein binds specifically to 23S rRNA; its binding is stimulated by other ribosomal proteins, e.g. L4, L17, and L20. It is important during the early stages of 50S assembly. It makes multiple contacts with different domains of the 23S rRNA in the assembled 50S subunit and ribosome. Its function is as follows. The globular domain of the protein is located near the polypeptide exit tunnel on the outside of the subunit, while an extended beta-hairpin is found that lines the wall of the exit tunnel in the center of the 70S ribosome. This Prochlorococcus marinus subsp. pastoris (strain CCMP1986 / NIES-2087 / MED4) protein is Large ribosomal subunit protein uL22.